A 451-amino-acid polypeptide reads, in one-letter code: tRNA modification GTPase MnmE (451 aa).

3 residues coordinate (6S)-5-formyl-5,6,7,8-tetrahydrofolate: R23, E80, and K119. Residues 215–372 (GIKVVLTGQP…LRTVLLKTVG (158 aa)) form the TrmE-type G domain. K(+) is bound at residue N225. GTP contacts are provided by residues 225-230 (NVGKSS), 244-250 (TEIPGTT), and 269-272 (DTAG). Residue S229 coordinates Mg(2+). K(+) contacts are provided by T244, I246, and T249. Mg(2+) is bound at residue T250. K451 contributes to the (6S)-5-formyl-5,6,7,8-tetrahydrofolate binding site.

Belongs to the TRAFAC class TrmE-Era-EngA-EngB-Septin-like GTPase superfamily. TrmE GTPase family. In terms of assembly, homodimer. Heterotetramer of two MnmE and two MnmG subunits. It depends on K(+) as a cofactor.

The protein localises to the cytoplasm. In terms of biological role, exhibits a very high intrinsic GTPase hydrolysis rate. Involved in the addition of a carboxymethylaminomethyl (cmnm) group at the wobble position (U34) of certain tRNAs, forming tRNA-cmnm(5)s(2)U34. The protein is tRNA modification GTPase MnmE of Nitrosomonas eutropha (strain DSM 101675 / C91 / Nm57).